Consider the following 184-residue polypeptide: Probable chemoreceptor glutamine deamidase CheD (184 aa).

This sequence belongs to the CheD family.

It carries out the reaction L-glutaminyl-[protein] + H2O = L-glutamyl-[protein] + NH4(+). In terms of biological role, probably deamidates glutamine residues to glutamate on methyl-accepting chemotaxis receptors (MCPs), playing an important role in chemotaxis. The polypeptide is Probable chemoreceptor glutamine deamidase CheD (Rhizobium johnstonii (strain DSM 114642 / LMG 32736 / 3841) (Rhizobium leguminosarum bv. viciae)).